Here is a 537-residue protein sequence, read N- to C-terminus: Immunoglobulin-like domain-containing receptor 1 (537 aa).

The N-terminal stretch at 1–22 is a signal peptide; sequence MGCGLLAAGLLLFTWLPAGCLS. The Ig-like V-type domain maps to 23 to 161; sequence LLVTVQHTER…TSGDPDKEVK (139 aa). Topologically, residues 23 to 166 are extracellular; the sequence is LLVTVQHTER…DKEVKLIVLH (144 aa). Cys-44 and Cys-144 are joined by a disulfide. Residues 167 to 187 traverse the membrane as a helical segment; that stretch reads WLTVIFIILGALLLLLLIGVC. Topologically, residues 188–537 are cytoplasmic; it reads WCQCCPQYCC…SSHSGRSVVI (350 aa). The disordered stretch occupies residues 333–537; the sequence is PPLIRDPPSS…SSHSGRSVVI (205 aa). Polar residues predominate over residues 341 to 357; it reads SSRTSNPSHQQRLNAVS. Composition is skewed to basic and acidic residues over residues 359–380 and 434–444; these read RHCD…RELQ and RRPEPREGAQR. The span at 480 to 490 shows a compositional bias: basic residues; the sequence is QRRHHHRRRRS. 2 positions are modified to phosphoserine: Ser-490 and Ser-492. Over residues 518 to 530 the composition is skewed to basic and acidic residues; it reads GNVERRLERESSH.

It belongs to the immunoglobulin superfamily. LISCH7 family. Homooligomer. Interacts with MARVELD2 and OCLN; the interaction is required to recruit MARVELD2 to tricellular contacts. Interacts (via C-terminus) with TRA2A, TRA2B and SRSF1. Interacts with PLSCR1. In terms of tissue distribution, expressed in the vestibule and in hair cells and supporting cells of the cochlea. Expressed in epithelial tissues. Highly expressed in colon but also detected in small intestine, bladder and lung. In colon, expressed in the upper portion of the crypts (at protein level). Expressed in CCK secretory cells of the proximal small intestine (at protein level). Expressed in the organ of Corti, stria vascularis, utricle and saccule of the inner ear.

It localises to the cell membrane. The protein resides in the cell junction. It is found in the tight junction. Its subcellular location is the nucleus. The protein localises to the cytoplasm. Its function is as follows. Maintains epithelial barrier function by recruiting MARVELD2/tricellulin to tricellular tight junctions (tTJs). Crucial for normal hearing by maintaining the structural and functional integrity of tTJs, which are critical for the survival of auditory neurosensory HCs. Mediates fatty acids and lipoproteins-stimulated CCK/cholecystokinin secretion in the small intestine. In the inner ear, may regulate alternative pre-mRNA splicing via binding to TRA2A, TRA2B and SRSF1. This is Immunoglobulin-like domain-containing receptor 1 from Mus musculus (Mouse).